Consider the following 408-residue polypeptide: Argininosuccinate synthase (408 aa).

Position 8 to 16 (8 to 16) interacts with ATP; sequence AYSGGLDTS. Tyr-86 contributes to the L-citrulline binding site. Gly-116 contributes to the ATP binding site. Residues Thr-118, Asn-122, and Asp-123 each contribute to the L-aspartate site. An L-citrulline-binding site is contributed by Asn-122. Arg-126, Ser-174, Glu-259, and Tyr-271 together coordinate L-citrulline.

This sequence belongs to the argininosuccinate synthase family. Type 1 subfamily. Homotetramer.

It is found in the cytoplasm. The enzyme catalyses L-citrulline + L-aspartate + ATP = 2-(N(omega)-L-arginino)succinate + AMP + diphosphate + H(+). It functions in the pathway amino-acid biosynthesis; L-arginine biosynthesis; L-arginine from L-ornithine and carbamoyl phosphate: step 2/3. The polypeptide is Argininosuccinate synthase (Leuconostoc mesenteroides subsp. mesenteroides (strain ATCC 8293 / DSM 20343 / BCRC 11652 / CCM 1803 / JCM 6124 / NCDO 523 / NBRC 100496 / NCIMB 8023 / NCTC 12954 / NRRL B-1118 / 37Y)).